We begin with the raw amino-acid sequence, 295 residues long: Ribosomal protein L11 methyltransferase (295 aa).

S-adenosyl-L-methionine contacts are provided by threonine 150, glycine 171, aspartate 193, and asparagine 232.

The protein belongs to the methyltransferase superfamily. PrmA family.

Its subcellular location is the cytoplasm. It carries out the reaction L-lysyl-[protein] + 3 S-adenosyl-L-methionine = N(6),N(6),N(6)-trimethyl-L-lysyl-[protein] + 3 S-adenosyl-L-homocysteine + 3 H(+). Methylates ribosomal protein L11. The sequence is that of Ribosomal protein L11 methyltransferase from Methylobacillus flagellatus (strain ATCC 51484 / DSM 6875 / VKM B-1610 / KT).